Here is a 146-residue protein sequence, read N- to C-terminus: Hemoglobin subunit beta (146 aa).

V1 is subject to N-acetylvaline. A Globin domain is found at H2–H146. Residue T12 is modified to Phosphothreonine. S44 carries the post-translational modification Phosphoserine. At K59 the chain carries N6-acetyllysine. Residue H63 coordinates heme b. K82 bears the N6-acetyllysine mark. H92 serves as a coordination point for heme b. C93 is subject to S-nitrosocysteine. Residue K144 is modified to N6-acetyllysine.

It belongs to the globin family. In terms of assembly, heterotetramer of two alpha chains and two beta chains. As to expression, red blood cells.

Its function is as follows. Involved in oxygen transport from the lung to the various peripheral tissues. This chain is Hemoglobin subunit beta (HBB), found in Leptonychotes weddellii (Weddell seal).